A 360-amino-acid chain; its full sequence is Aminomethyltransferase (360 aa).

The protein belongs to the GcvT family. The glycine cleavage system is composed of four proteins: P, T, L and H.

It carries out the reaction N(6)-[(R)-S(8)-aminomethyldihydrolipoyl]-L-lysyl-[protein] + (6S)-5,6,7,8-tetrahydrofolate = N(6)-[(R)-dihydrolipoyl]-L-lysyl-[protein] + (6R)-5,10-methylene-5,6,7,8-tetrahydrofolate + NH4(+). The glycine cleavage system catalyzes the degradation of glycine. In Pseudomonas aeruginosa (strain ATCC 15692 / DSM 22644 / CIP 104116 / JCM 14847 / LMG 12228 / 1C / PRS 101 / PAO1), this protein is Aminomethyltransferase.